The sequence spans 561 residues: Reductase FVEG_12641 (561 aa).

Residues Met-1–Gly-26 are disordered. An MOSC domain is found at Gln-52–Leu-189. Residues Ser-237–Asn-342 form the FAD-binding FR-type domain. FMN-binding positions include Phe-288–Glu-289, Gly-305–Ser-307, Arg-313–Ser-316, and Thr-362. The 2Fe-2S ferredoxin-type domain occupies Phe-474 to Asp-561. Cys-512 is a binding site for [2Fe-2S] cluster. Ser-514 is an FMN binding site. [2Fe-2S] cluster-binding residues include Cys-517, Cys-520, and Cys-548.

The protein belongs to the PDR/VanB family. Monomer. The cofactor is FMN.

In terms of biological role, reductase; part of the Fusarium detoxification of benzoxazolinone cluster 2 (FDB2) involved in the degradation of benzoxazolinones produced by the host plant. Maize, wheat, and rye produce the 2 benzoxazinone phytoanticipins 2,4-dihy-droxy-7-methoxy-1,4-benzoxazin-3-one (DIMBOA) and 2,4-dihydroxy-1,4-benzoxazin-3-one (DIBOA) that, due to their inherent instability once released, spontaneously degrade to the more stable corresponding benzoxazolinones, 6-methoxy-2-benzoxazolinone (MBOA) and 2-benzoxazolinone (BOA), respectively. The first step in the detoxification of benzoxazolinones involves the hydrolysis of the cyclic ester bond of benzoxazolinones by the FDB1 cluster gamma-lactamase MBL1 to aminophenols. MBL1 is able to convert BOA into 2-aminophenol (2-AP), as well as MBOA into 5-methoxy-2-aminophenol (2-AMP). The FDB2 cluster N-malonyltransferase FDB2/NAT1 then metabolizes aminophenols via N-malonylation to non-toxic malonamic acids. FDB2/NAT1 converts 2-AP into N-(2-hydroxyphenyl) malonamic acid (HPMA) and 2-AMP into N-(2-hydroxy-4-methoxyphenyl) malonamic acid (HMPMA). The duplicated dienlactone hydrolases DLH1 and DLH2 may provide redundant function for hydrolyzing the lactone moiety in the BOA molecule. The roles of the amidases an other enzymes encoded by the 2 FDB clusters have not been identified so far. The chain is Reductase FVEG_12641 from Gibberella moniliformis (strain M3125 / FGSC 7600) (Maize ear and stalk rot fungus).